Here is a 546-residue protein sequence, read N- to C-terminus: Alpha-isocomene synthase (546 aa).

Positions 299, 303, 443, and 451 each coordinate Mg(2+). The DDXXD motif signature appears at 299-303 (DDTYD).

This sequence belongs to the terpene synthase family. Tpsa subfamily. It depends on Mg(2+) as a cofactor. Mn(2+) is required as a cofactor. In terms of tissue distribution, highly expressed in roots, lower levels in stems and leaves and detected in disk florets, but not in ray florets.

The enzyme catalyses (2E,6E)-farnesyl diphosphate = (-)-alpha-isocomene + diphosphate. It participates in secondary metabolite biosynthesis; terpenoid biosynthesis. Sesquiterpene synthase involved in the biosynthesis of alpha-isocomene as the major product and detectable amounts of beta-caryophyllene, beta-isocomene, silphinene and modeph-2-ene. Produces exclusively the (-)-(E)-beta caryophyllene enantiomer. The polypeptide is Alpha-isocomene synthase (Matricaria chamomilla var. recutita (German chamomile)).